A 488-amino-acid polypeptide reads, in one-letter code: MAESILDRTINRFWYNLGEDCLSESQFDLMIRLMEESLDGDQIIDLTSLPSDNLQVEQVMTTTDDSISEESEFLLAIGETSEDESDSGEEPEFEQVRMDRTGGTEIPKKEDGAEPSRYNERKRKTTEDRYFPTQPKTIPGQKQTSMGILNIDCQTNRRTLIDDWAAEIGLIVKTNREDYLDPETILLLMEHKTSGIAKELIRNTRWNRTTGDIIEQVIDAMYTMFLGLNYSDNKVAEKIDEQEKAKIRMTKLQLCDICYLEEFTCDYEKNMYKTELADFPGYINQYLSKIPIIGEKALTRFRHEANGTSIYSLGFAAKIVKEELSKICALSKKQKKLKKFNKKCCSIGEASVEYGCKKTSKKKYHNKRYKKKYKVYKPYKKKKKFRSGKYFKPKEKKGSKQKYCPKGKKDCRCWISNIEGHYANECPNRQSSEKAHILQQAEKLGLQPIEEPYEGVQEVFILEYKEEEEETSTEESDGSSTSEDSDSD.

A disordered region spans residues 79-142; it reads ETSEDESDSG…TQPKTIPGQK (64 aa). Residues 80 to 93 are compositionally biased toward acidic residues; it reads TSEDESDSGEEPEF. Residues 94-130 are compositionally biased toward basic and acidic residues; sequence EQVRMDRTGGTEIPKKEDGAEPSRYNERKRKTTEDRY. The short motif at 121-124 is the Nuclear localization signal element; sequence RKRK. The CCHC-type; degenerate zinc-finger motif lies at 411-428; it reads CRCWISNIEGHYANECPN. A disordered region spans residues 464-488; the sequence is YKEEEEETSTEESDGSSTSEDSDSD. Residues 465–488 are compositionally biased toward acidic residues; the sequence is KEEEEETSTEESDGSSTSEDSDSD.

Belongs to the caulimoviridae capsid protein family. As to quaternary structure, interacts (via nuclear localization signal) with host importin alpha.

It is found in the virion. The protein localises to the host nucleus. In terms of biological role, self assembles to form an icosahedral capsid, about 50 nm in diameter, nm, composed of 420 subunits of the viral capsid protein. The capsid encapsulates the genomic dsDNA. Following virus entry into host cell, provides nuclear import of the viral genome. Virus particles do not enter the nucleus, but dock at the nuclear membrane through the interaction with host importins. This Arabidopsis thaliana (Mouse-ear cress) protein is Capsid protein.